Here is a 375-residue protein sequence, read N- to C-terminus: MTDDNPAIVIDNGSGMCKAGFAGDDAPRAVFPTVVGRPKRETVLVGSTHKEEYIGDEALAKRGVLKLSYPIEHGQIKDWDMMEKVWHHCYFNELRAQPSDHAVLLTEAPKNPKANREKICQIMFETFAVPAFYVQVQAVLALYSSGRTTGIVIDTGDGVTHTVPVYEGYSLPHAVLRSEIAGKELTDFCQINLQENGASFTTSAEFEIVRDIKEKLCFVALDYESVLAASMESANYTKTYELPDGVVITVNQARFKTPELLFRPELNNSDMDGIHQLCYKTIQKCDIDIRSELYSNVVLSGGSSMFAGLPERLEKELLDLIPAGKRVRISSPEDRKYSAWVGGSVLGSLATFESMWVSSQEYQENGASIANRKCM.

It belongs to the actin family.

It is found in the cytoplasm. The protein resides in the cytoskeleton. It catalyses the reaction ATP + H2O = ADP + phosphate + H(+). Its function is as follows. Actins are highly conserved proteins that are involved in various types of cell motility and are ubiquitously expressed in all eukaryotic cells. The sequence is that of Actin from Giardia intestinalis (Giardia lamblia).